The chain runs to 1411 residues: Uveal autoantigen with coiled-coil domains and ankyrin repeats (1411 aa).

M1 is modified (N-acetylmethionine). The tract at residues 1–30 (MKSLKSRLWKQDAPGPTSPSSPTAVASTQS) is disordered. Over residues 13-30 (APGPTSPSSPTAVASTQS) the composition is skewed to low complexity. ANK repeat units follow at residues 69–98 (EGRS…DVAT), 102–131 (AGRN…PTEH), 135–164 (QGRT…SVNA), 168–197 (DGRT…DVNS), 201–230 (QNRT…DLTL), and 234–263 (LGHD…NTNK). The segment at 263–301 (KGRELWRKGPPLQQRNLSHTQDEGSVKSTQREQREPHSF) is disordered. S280 carries the phosphoserine modification. Basic and acidic residues predominate over residues 282 to 301 (TQDEGSVKSTQREQREPHSF). Coiled-coil stretches lie at residues 299–379 (HSFQ…NRFK), 442–624 (SENE…LKEL), and 652–1380 (VKRL…AIYR). Residues 1006-1031 (GLKEQLSEQTHKCRQRDEEVKKGKQE) form a disordered region.

Component of the apoptosome complex, composed of APAF1, pro-caspase-9 and UACA. In the complex, it probably interacts directly with APAF1. Interacts with LGALS3, ARF6 and ACTB. Interacts with RAB39A. Highly expressed in heart, liver, kidney and testis. Weakly expressed in lung and skeletal muscle. Not expressed in brain and spleen.

It localises to the nucleus. The protein localises to the cytoplasm. It is found in the cytoskeleton. In terms of biological role, regulates APAF1 expression and plays an important role in the regulation of stress-induced apoptosis. Promotes apoptosis by regulating three pathways, apoptosome up-regulation, LGALS3/galectin-3 down-regulation and NF-kappa-B inactivation. Regulates the redistribution of APAF1 into the nucleus after proapoptotic stress. Down-regulates the expression of LGALS3 by inhibiting NFKB1. Functionally, modulates isoactin dynamics to regulate the morphological alterations required for cell growth and motility. Interaction with ARF6 may modulate cell shape and motility after injury. May be involved in multiple neurite formation. In Mus musculus (Mouse), this protein is Uveal autoantigen with coiled-coil domains and ankyrin repeats (Uaca).